The following is a 109-amino-acid chain: Small ribosomal subunit protein bS6 (109 aa).

This sequence belongs to the bacterial ribosomal protein bS6 family.

Functionally, binds together with bS18 to 16S ribosomal RNA. In Anaplasma marginale (strain St. Maries), this protein is Small ribosomal subunit protein bS6.